Reading from the N-terminus, the 299-residue chain is Probable lipid kinase YegS (299 aa).

The DAGKc domain occupies 2-133 (AEFPASLLIL…IDMAQVNKQT (132 aa)). Residues Thr-40, 66-72 (GDGTINE), and Thr-95 each bind ATP. Mg(2+) is bound by residues Leu-215, Asp-218, and Leu-220. Residue Glu-271 is the Proton acceptor of the active site.

Belongs to the diacylglycerol/lipid kinase family. YegS lipid kinase subfamily. Mg(2+) serves as cofactor. Ca(2+) is required as a cofactor.

It is found in the cytoplasm. Its function is as follows. Probably phosphorylates lipids; the in vivo substrate is unknown. The polypeptide is Probable lipid kinase YegS (Escherichia coli (strain 55989 / EAEC)).